The primary structure comprises 139 residues: Transcription antitermination protein NusB (139 aa).

This sequence belongs to the NusB family.

Its function is as follows. Involved in transcription antitermination. Required for transcription of ribosomal RNA (rRNA) genes. Binds specifically to the boxA antiterminator sequence of the ribosomal RNA (rrn) operons. This is Transcription antitermination protein NusB from Enterobacter sp. (strain 638).